The primary structure comprises 390 residues: MSASGFTSPFGANSNPFGSPEERRGVAGSIQPVLEEEEADGIGSEPISFKSPGFRAPFGGGDANSEGPPSSRPQNPDGYPAQYNFARRTSVSAESLKPIADSYDNWTPPFHPKSAEQLDRLKKAIQGNFLFSHLDDEQSAQILGALVEKPIPAKDIKVIVQGDAGDYFYVVEKGKFSVHVNSSGVMQAGTQGLGDHVGTIEAGGSFGELALMYNAPRAATVMSAEPNCVLWALDRVTFRRILMESTFSRRRMYENFLEEVPILSTLTAYERSKIADALETQKYPPGTVVIKEGDPGEDFYLLECGEAEAFKAGIDQPVKLYKKGDFFGELALLNDAPRAASVVSKTEVKVAALGKSAFQRLLGPVEPIMRRTRYDAIKTGVEEMDPLQAA.

Residues 1-17 (MSASGFTSPFGANSNPF) are compositionally biased toward polar residues. A disordered region spans residues 1–81 (MSASGFTSPF…RPQNPDGYPA (81 aa)). Positions 1 to 129 (MSASGFTSPF…RLKKAIQGNF (129 aa)) are dimerization and phosphorylation. Ser-90 carries the post-translational modification Phosphoserine. Residues 130-261 (LFSH…EEVP), Glu-208, Arg-217, 262-383 (ILST…GVEE), Glu-329, and Arg-338 contribute to the 3',5'-cyclic AMP site.

Belongs to the cAMP-dependent kinase regulatory chain family. Tetramer, composed of 2 regulatory (R) and 2 catalytic (C) subunits. In the presence of cAMP it dissociates into 2 active monomeric C subunits and an R dimer.

In Pyricularia oryzae (strain 70-15 / ATCC MYA-4617 / FGSC 8958) (Rice blast fungus), this protein is cAMP-dependent protein kinase regulatory subunit (SUM1).